A 302-amino-acid chain; its full sequence is RELT-like protein 2 (302 aa).

Residues 15-35 (LYMLFLLVLVFFLMGLVGFMI) form a helical membrane-spanning segment. Disordered regions lie at residues 47–68 (RTSR…DDVN), 135–164 (CSRS…TTVF), 177–212 (RYGL…GQPR), and 247–302 (VPCT…AGGM). At Ser52 the chain carries Phosphoserine. Composition is skewed to basic and acidic residues over residues 148 to 158 (RSKEGKGRPRP) and 177 to 188 (RYGLHEHRDGSP). Over residues 277-294 (QEANGQPTKLDTSGQQDS) the composition is skewed to polar residues.

This sequence belongs to the RELT family. Interacts with RELT, RELL1, OXSR1, PLSCR1 and TRAF2.

Its subcellular location is the cell membrane. Induces activation of MAPK14/p38 cascade, when overexpressed. Induces apoptosis, when overexpressed. This Rattus norvegicus (Rat) protein is RELT-like protein 2 (Rell2).